Here is a 519-residue protein sequence, read N- to C-terminus: Fatty acid--[acyl-carrier-protein] ligase ScoC (519 aa).

T167 serves as a coordination point for Mg(2+). Residues I216 and T312 each coordinate ATP. E313 is a Mg(2+) binding site. D394 and K411 together coordinate ATP.

Belongs to the ATP-dependent AMP-binding enzyme family. It depends on Mg(2+) as a cofactor.

The catalysed reaction is a medium-chain fatty acid + holo-[ACP] + ATP = a medium-chain fatty acyl-[ACP] + AMP + diphosphate. The enzyme catalyses a medium-chain fatty acid + ATP + H(+) = a medium-chain fatty acyl-AMP + diphosphate. It carries out the reaction a medium-chain fatty acyl-AMP + holo-[ACP] = a medium-chain fatty acyl-[ACP] + AMP + H(+). It catalyses the reaction octanoate + holo-[ACP] + ATP = octanoyl-[ACP] + AMP + diphosphate. The catalysed reaction is octanoate + ATP + H(+) = octanoyl-AMP + diphosphate. The enzyme catalyses octanoyl-AMP + holo-[ACP] = octanoyl-[ACP] + AMP + H(+). It carries out the reaction a (2E)-enoyl fatty acid + holo-[ACP] + ATP = a (2E)-enoyl-[ACP] + AMP + diphosphate. It catalyses the reaction a (2E)-enoyl fatty acid + ATP + H(+) = a (2E)-2-fatty-enoyl-AMP + diphosphate. The catalysed reaction is a (2E)-2-fatty-enoyl-AMP + holo-[ACP] = a (2E)-enoyl-[ACP] + AMP + H(+). The enzyme catalyses (2E)-2-butenoate + holo-[ACP] + ATP = (2E)-butenoyl-[ACP] + AMP + diphosphate. It carries out the reaction (2E)-2-butenoate + ATP + H(+) = (2E)-but-2-enoyl-AMP + diphosphate. It catalyses the reaction (2E)-but-2-enoyl-AMP + holo-[ACP] = (2E)-butenoyl-[ACP] + AMP + H(+). The catalysed reaction is a (3R)-3-isocyanyl-fatty acid + holo-[ACP] + ATP = a (3R)-3-isocyanyl-fatty acyl-[ACP] + AMP + diphosphate. The enzyme catalyses a (3R)-3-isocyanyl-fatty acid + ATP + H(+) = a (3R)-3-isocyanyl-fatty acyl-AMP + diphosphate. It carries out the reaction a (3R)-3-isocyanyl-fatty acyl-AMP + holo-[ACP] = a (3R)-3-isocyanyl-fatty acyl-[ACP] + AMP + H(+). It catalyses the reaction (3R)-3-isocyanylbutanoate + holo-[ACP] + ATP = (3R)-3-isocyanylbutanoyl-[ACP] + AMP + diphosphate. The catalysed reaction is (3R)-3-isocyanylbutanoate + ATP + H(+) = (3R)-3-isocyanylbutanoyl-AMP + diphosphate. The enzyme catalyses (3R)-3-isocyanylbutanoyl-AMP + holo-[ACP] = (3R)-3-isocyanylbutanoyl-[ACP] + AMP + H(+). Its function is as follows. Acyl:acyl-carrier protein ligase involved in the biosynthesis of a unique class of isonitrile lipopeptides (INLPs). Shows a strong preference for fatty acids with a short/medium-chain length (C4-C8) in vitro, and accepts alpha,beta-unsaturated fatty acids such as crotonate, which seems to be a physiological substrate. Acts twice during the INLP pathway, catalyzing the activation of crotonate ((2E)-2-butenoate) as well as (3R)-3-isocyanylbutanoate as acyl-adenylates (acyl-AMP), and then the acyl transfer to the dedicated acyl-carrier protein ScoB. The sequence is that of Fatty acid--[acyl-carrier-protein] ligase ScoC from Streptomyces coeruleorubidus.